The primary structure comprises 148 residues: Ribonuclease H (148 aa).

The 142-residue stretch at Met1–Asp142 folds into the RNase H type-1 domain. Positions 10, 48, 70, and 134 each coordinate Mg(2+). The interval Gly129 to Arg148 is disordered.

The protein belongs to the RNase H family. Monomer. Requires Mg(2+) as cofactor.

The protein localises to the cytoplasm. The catalysed reaction is Endonucleolytic cleavage to 5'-phosphomonoester.. Functionally, endonuclease that specifically degrades the RNA of RNA-DNA hybrids. The polypeptide is Ribonuclease H (Pseudomonas entomophila (strain L48)).